The primary structure comprises 136 residues: Large ribosomal subunit protein uL16 (136 aa).

It belongs to the universal ribosomal protein uL16 family. In terms of assembly, part of the 50S ribosomal subunit.

Its function is as follows. Binds 23S rRNA and is also seen to make contacts with the A and possibly P site tRNAs. The sequence is that of Large ribosomal subunit protein uL16 from Elusimicrobium minutum (strain Pei191).